A 49-amino-acid polypeptide reads, in one-letter code: uncharacterized protein (49 aa).

An N-terminal signal peptide occupies residues M1–S22.

This is an uncharacterized protein from Saccharomyces cerevisiae (strain ATCC 204508 / S288c) (Baker's yeast).